The primary structure comprises 1460 residues: Nucleoporin NUP159 (1460 aa).

The segment at 1-500 (MSSLKDEVPT…SEQDATDPAS (500 aa)) is interaction with DBP5. The FG 1 repeat unit spans residues 228-231 (AVFG). The stretch at 267 to 270 (PPFG) is one PXFG 1 repeat. Residues 401–435 (KSLSPTSEKIPIAGQEQEEKKKNNESSKALSENPF) are disordered. The residue at position 404 (S404) is a Phosphoserine. The stretch at 462-470 (STFGAPSFG) is one SXFGXPXFG 1 repeat. The tract at residues 483 to 504 (STSTGVASSEQDATDPASAKPV) is disordered. The interval 497-701 (DPASAKPVFG…KPNTSTKPKT (205 aa)) is interactions with CRM1 and GLE1. The SXFGXPXFG 2; approximate repeat unit spans residues 503-511 (PVFGKPAFG). One copy of the SXFGXPXFG 3; approximate repeat lies at 522–530 (YAFGKPSFG). Residues 532–535 (PSFG) form a PXFG 2 repeat. Residues 533-619 (SFGSGKSSVE…SAFGTASSNE (87 aa)) are disordered. Polar residues-rich tracts occupy residues 536–546 (SGKSSVESPAS), 556–567 (GTPSFGSGNSSV), 582–593 (GTPSFGSGNSSA), and 607–619 (FGTS…SSNE). An SXFGXPXFG 4 repeat occupies 548–556 (SAFGKPSFG). The PXFG 3 repeat unit spans residues 558 to 561 (PSFG). An SXFGXPXFG 5 repeat occupies 574 to 582 (SAFGKPSFG). A PXFG 4 repeat occupies 584 to 587 (PSFG). The stretch at 600–608 (SAFGKPSFG) is one SXFGXPXFG 6 repeat. The SXFG 1 repeat unit spans residues 610 to 613 (SAFG). Residues 624-632 (SIFGKAAFG) form an SXFGXPXFG 7; approximate repeat. Residues 642-645 (ELFG) form an FG 2 repeat. The segment at 647 to 704 (NFTISKPTVDSPKEVDSTSPFPSSGDQSEDESKSDVDSSSTPFGTKPNTSTKPKTNAF) is disordered. A Phosphoserine modification is found at S657. Residues 683–704 (DSSSTPFGTKPNTSTKPKTNAF) show a composition bias toward low complexity. The FG 3 repeat unit spans residues 687–690 (TPFG). An FXFG 1 repeat occupies 704 to 707 (FDFG). The SXFG 2 repeat unit spans residues 709 to 712 (SSFG). Phosphoserine is present on S724. Polar residues-rich tracts occupy residues 727 to 750 (TFKF…FSSF), 757 to 767 (NGSLSKGSTSE), and 778 to 800 (NGPN…STRL). Residues 727 to 824 (TFKFGTQASP…EAQKSPIGKL (98 aa)) are disordered. One copy of the FXFG 2 repeat lies at 728-731 (FKFG). A phosphoserine mark is found at S735 and S745. Phosphothreonine is present on T803. A compositionally biased stretch (acidic residues) spans 804 to 814 (PSDEDGEVVEE). Phosphoserine is present on residues S805 and S819. A PXFG 5 repeat occupies 842–845 (PVFG). The segment covering 861 to 889 (TNITKPSSTTPAFSFGNSTMNKSNTSTVS) has biased composition (polar residues). A disordered region spans residues 861–1092 (TNITKPSSTT…DINTDELPHG (232 aa)). One copy of the FXFG 3 repeat lies at 873 to 876 (FSFG). S889 is modified (phosphoserine). Residues 917–936 (AKEERTGESSKKDHNDDPKD) show a composition bias toward basic and acidic residues. S940 is modified (phosphoserine). The segment covering 942 to 958 (SEISVRTSESAFDTTAN) has biased composition (polar residues). Basic and acidic residues-rich tracts occupy residues 960 to 1002 (EIPK…KNNE), 1017 to 1027 (ALKKDNEKENF), 1035 to 1061 (QFED…KESD), and 1068 to 1092 (SDRD…LPHG). Residues 1086 to 1175 (TDELPHGGEA…TCNFSVQTFE (90 aa)) form an interaction with DYN2 region. The interaction with NUP82 stretch occupies residues 1223–1460 (AEFTVLMENI…DFFKNLNMAK (238 aa)). Coiled coils occupy residues 1279-1320 (EQMQ…YLFL) and 1383-1418 (AKLA…GKKA).

As to quaternary structure, component of the nuclear pore complex (NPC). NPC constitutes the exclusive means of nucleocytoplasmic transport. NPCs allow the passive diffusion of ions and small molecules and the active, nuclear transport receptor-mediated bidirectional transport of macromolecules such as proteins, RNAs, ribonucleoparticles (RNPs), and ribosomal subunits across the nuclear envelope. Due to its 8-fold rotational symmetry, all subunits are present with 8 copies or multiples thereof. Part of the NUP82 subcomplex, interacts with NUP82 through its C-terminal coiled coil. This subcomplex is the base for interactions with NUP116 and GLE2, with NUP42 and GLE1 and with DYN2. Interacts directly with DYN2. Interacts through its FG repeats with karyopherins, such as heterodimeric mRNA transport factor MEX67/MTR2, CRM1 (XPO1), and PSE1 (GSP1-GDP dependent). Interaction with CRM1 (XPO1) is GSP1-GTP dependent and stimulated by RNA1. NUP159 also interacts with GLE1 and the ATP-dependent RNA helicase DBP5.

It localises to the nucleus. The protein resides in the nuclear pore complex. It is found in the nucleus membrane. Functionally, functions as a component of the nuclear pore complex (NPC). NPC components, collectively referred to as nucleoporins (NUPs), can play the role of both NPC structural components and of docking or interaction partners for transiently associated nuclear transport factors. Active directional transport is assured by both, a Phe-Gly (FG) repeat affinity gradient for these transport factors across the NPC and a transport cofactor concentration gradient across the nuclear envelope (GSP1 and GSP2 GTPases associated predominantly with GTP in the nucleus, with GDP in the cytoplasm). NUP159 plays an important role in several nuclear export pathways including poly(A)+ RNA, pre-ribosome, and protein export. The sequence is that of Nucleoporin NUP159 (NUP159) from Saccharomyces cerevisiae (strain ATCC 204508 / S288c) (Baker's yeast).